The chain runs to 462 residues: Citrate synthase, mitochondrial (462 aa).

Residues 1-21 (MRSINQLLKQASLSQKSQYNF) constitute a mitochondrion transit peptide. Residues His-300, His-346, and Asp-401 contribute to the active site.

This sequence belongs to the citrate synthase family. As to quaternary structure, homodimer.

The protein resides in the mitochondrion matrix. It localises to the cytoplasm. Its subcellular location is the cytoskeleton. It carries out the reaction oxaloacetate + acetyl-CoA + H2O = citrate + CoA + H(+). Its pathway is carbohydrate metabolism; tricarboxylic acid cycle; isocitrate from oxaloacetate: step 1/2. Its function is as follows. Structural protein involved in oral morphogenesis and in pronuclear behavior during conjugation. Respiratory enzyme. This chain is Citrate synthase, mitochondrial, found in Tetrahymena thermophila.